The sequence spans 339 residues: tRNA dimethylallyltransferase (339 aa).

33–40 contacts ATP; the sequence is GPTASGKT. Residue 35–40 coordinates substrate; sequence TASGKT. 2 interaction with substrate tRNA regions span residues 58–61 and 182–186; these read DSLL and QRIQR.

It belongs to the IPP transferase family. In terms of assembly, monomer. Requires Mg(2+) as cofactor.

The enzyme catalyses adenosine(37) in tRNA + dimethylallyl diphosphate = N(6)-dimethylallyladenosine(37) in tRNA + diphosphate. Functionally, catalyzes the transfer of a dimethylallyl group onto the adenine at position 37 in tRNAs that read codons beginning with uridine, leading to the formation of N6-(dimethylallyl)adenosine (i(6)A). This is tRNA dimethylallyltransferase from Acidithiobacillus ferrooxidans (strain ATCC 23270 / DSM 14882 / CIP 104768 / NCIMB 8455) (Ferrobacillus ferrooxidans (strain ATCC 23270)).